The primary structure comprises 1277 residues: NPC intracellular cholesterol transporter 1 (1277 aa).

The N-terminal stretch at 1-22 (MSARGPAFGLLLLLLCPVQVFS) is a signal peptide. Residues 23-269 (QSCVWYGECG…WRILGLDAMY (247 aa)) lie on the Lumenal side of the membrane. 9 disulfide bridges follow: C25–C74, C31–C42, C63–C109, C75–C113, C97–C238, C100–C160, C177–C184, C227–C243, and C240–C247. Position 41 (N41) interacts with cholesterol. N70 carries an N-linked (GlcNAc...) asparagine glycan. Q79 contacts cholesterol. N122 and N135 each carry an N-linked (GlcNAc...) asparagine glycan. Residues 175–205 (LLCGREAQACNATNWIEYMFNKDNGQAPFTI) form an important for cholesterol binding and cholesterol transfer from NPC1 to liposomes region. N185 and N222 each carry an N-linked (GlcNAc...) asparagine glycan. A helical membrane pass occupies residues 270-290 (VIMWSSYMAFLIVFFGAFFAV). Residues 291 to 350 (WCYRKRYFVSEYTPIDGNIAFSVNSSDKGQAFCCDPLGAAFERGLRRLFAQWGAFCVRHP) lie on the Cytoplasmic side of the membrane. A helical membrane pass occupies residues 351–371 (GCVVFFSLAFIVACSSGLVFI). The Lumenal segment spans residues 372-621 (RVTTDPVDLW…ELNRESNSDL (250 aa)). Residues N415, N452, N459, and N478 are each glycosylated (N-linked (GlcNAc...) asparagine). Intrachain disulfides connect C468/C479 and C516/C533. An SSD domain is found at 620 to 785 (DLFTILISYA…ITCFVSLLGL (166 aa)). A helical membrane pass occupies residues 622–642 (FTILISYAIMFLYISIALGHI). At 643–653 (KSCSRLLVDSK) the chain is on the cytoplasmic side. A helical transmembrane segment spans residues 654 to 674 (ISLGIAGILIVLSSVACSLGI). The Lumenal segment spans residues 675–677 (FSY). The chain crosses the membrane as a helical span at residues 678 to 698 (IGVPLTLIVIEVIPFLVLAVG). The Cytoplasmic segment spans residues 699–734 (VDNIFILVQTYQRDERLQGETLDQQLGRVLGEVAPS). A helical membrane pass occupies residues 735 to 755 (MFLSSFSETVAFFLGGLSVVP). The Lumenal segment spans residues 756-759 (AVHT). Residues 760–780 (FSLFAGMAVLIDFLLQITCFV) form a helical membrane-spanning segment. The Cytoplasmic portion of the chain corresponds to 781–832 (SLLGLDIKRQEKNRLDVVCCVQGAEDGAGVQASESCLFRFFKNSYAPLLLKD). Residues 833 to 853 (WMRPIVIAVFVGVLSFSIAVL) traverse the membrane as a helical segment. At 854 to 1097 (NKVEIGLDQS…EQYLTVIDDT (244 aa)) the chain is on the lumenal side. N-linked (GlcNAc...) asparagine glycosylation occurs at N898. C909 and C914 are oxidised to a cystine. N-linked (GlcNAc...) asparagine glycosylation is found at N916, N931, N961, N968, N1028, and N1063. 3 disulfide bridges follow: C956–C1011, C957–C979, and C967–C976. The chain crosses the membrane as a helical span at residues 1098–1118 (IFNLGVSLGAIFLVTVVLMGC). The Cytoplasmic segment spans residues 1119 to 1123 (ELWAT). The helical transmembrane segment at 1124-1144 (VIMCVTIAMILVNMFGVMWLW) threads the bilayer. G1145 is a topological domain (lumenal). A helical membrane pass occupies residues 1146–1166 (ISLNAVSLVNLVMSCGISVEF). The Cytoplasmic segment spans residues 1167–1194 (CSHITRAFTLSTKGSRVDRAEEALAHMG). Residues 1195–1215 (SSVFSGITLTKFGGIVVLAFA) traverse the membrane as a helical segment. Over 1216 to 1226 (KSQIFQIFYFR) the chain is Lumenal. Residues 1227-1247 (MYLAIVLLGATHGLIFLPVLL) form a helical membrane-spanning segment. Residues 1248-1277 (SYIGPSINKAKSLATQERYKGTEREQLLNF) lie on the Cytoplasmic side of the membrane. The segment at 1274 to 1277 (LLNF) is required for location in lysosomes. The Di-leucine motif motif lies at 1274–1277 (LLNF).

The protein belongs to the patched family. Interacts (via the second lumenal domain) with NPC2. Interacts with TMEM97; the interaction may decrease NPC1 availability to the cell. Interacts with TIM1. Interacts with SLC38A9; this interaction inhibits cholesterol-mediated mTORC1 activation via its sterol transport activity. In terms of processing, N-glycosylated. In terms of tissue distribution, detected in corpus luteum, granulosa cells and adrenal gland.

The protein localises to the late endosome membrane. It localises to the lysosome membrane. It catalyses the reaction cholesterol(in) = cholesterol(out). Functionally, intracellular cholesterol transporter which acts in concert with NPC2 and plays an important role in the egress of cholesterol from the endosomal/lysosomal compartment. Unesterified cholesterol that has been released from LDLs in the lumen of the late endosomes/lysosomes is transferred by NPC2 to the cholesterol-binding pocket in the N-terminal domain of NPC1. Cholesterol binds to NPC1 with the hydroxyl group buried in the binding pocket. Binds oxysterol with higher affinity than cholesterol. May play a role in vesicular trafficking in glia, a process that may be crucial for maintaining the structural and functional integrity of nerve terminals. Inhibits cholesterol-mediated mTORC1 activation throught its interaction with SLC38A9. This Sus scrofa (Pig) protein is NPC intracellular cholesterol transporter 1.